The sequence spans 483 residues: Regulatory protein ViaA (483 aa).

This sequence belongs to the ViaA family. As to quaternary structure, homodimer. Interacts with RavA.

The protein localises to the cytoplasm. Functionally, component of the RavA-ViaA chaperone complex, which may act on the membrane to optimize the function of some of the respiratory chains. ViaA stimulates the ATPase activity of RavA. The protein is Regulatory protein ViaA of Escherichia coli O1:K1 / APEC.